The chain runs to 96 residues: Cytoplasmic envelopment protein 3 (96 aa).

Residue Gly-2 is the site of N-myristoyl glycine; by host attachment. An asp/Glu-rich (acidic) region spans residues 37 to 43 (DIESEEE). Ser-40 bears the Phosphoserine mark. Positions 50–96 (PDVRVVTRAPGPQYRRPSDPPSRHTRRRDPDVARPPATLTPPLSDSE) are disordered. The segment covering 65–81 (RPSDPPSRHTRRRDPDV) has biased composition (basic and acidic residues).

This sequence belongs to the herpesviridae cytoplasmic envelopment protein 3 family. As to quaternary structure, interacts with cytoplasmic envelopment protein 2; this interaction is essential for the proper localization of each protein to the assembly complex and thus for the production of infectious virus. Interacts with gE (via C-terminus). Interacts with gD (via C-terminus). Interacts with UL56. Post-translationally, myristoylation and palmitoylation (probably on one or more of the nearby cysteines at the N-terminus) enable membrane-binding and Golgi apparatus-specific targeting and are essential for efficient packaging. In terms of processing, phosphorylated. Phosphorylation does not seem to be required for recycling to the host Golgi apparatus. Packaging is selective for underphosphorylated forms.

Its subcellular location is the virion tegument. It localises to the virion membrane. It is found in the host cell membrane. The protein resides in the host Golgi apparatus membrane. In terms of biological role, plays an important role in the cytoplasmic envelopment of tegument proteins and capsids during the assembly and egress processes. Also participates in viral entry at the fusion step probably by regulating the core fusion machinery. This is Cytoplasmic envelopment protein 3 from Homo sapiens (Human).